A 496-amino-acid polypeptide reads, in one-letter code: Pituitary adenylate cyclase-activating polypeptide type I receptor (496 aa).

The signal sequence occupies residues 1–20; it reads MARTLQLSLTALLLLPMAIA. At 21 to 152 the chain is on the extracellular side; it reads MHSDCIFKKE…SGDQDYYYLS (132 aa). Cystine bridges form between Cys-34/Cys-63, Cys-54/Cys-118, and Cys-77/Cys-134. Residues Asn-48, Asn-60, and Asn-117 are each glycosylated (N-linked (GlcNAc...) asparagine). The segment at 125–139 is important for ADCYAP1/PACAP ligand binding and specificity; the sequence is EPFPHYFDACGFDDY. The segment at 125–139 is important for ligand binding and specificity; sequence EPFPHYFDACGFDDY. The helical transmembrane segment at 153–177 threads the bilayer; it reads VKALYTVGYSTSLVTLTTAMVILCR. The Cytoplasmic segment spans residues 178–187; sequence FRKLHCTRNF. The helical transmembrane segment at 188 to 208 threads the bilayer; that stretch reads IHMNLFVSFMLRAISVFIKDW. The Extracellular portion of the chain corresponds to 209–223; sequence ILYAEQDSSHCFVST. A helical transmembrane segment spans residues 224–249; sequence VECKAVMVFFHYCVVSNYFWLFIEGL. Cys-226 and Cys-296 are oxidised to a cystine. At 250 to 267 the chain is on the cytoplasmic side; the sequence is YLFTLLVETFFPERRYFY. Residues 268–290 form a helical membrane-spanning segment; that stretch reads WYTIIGWGTPTVCVTVWAVLRLY. Topologically, residues 291–302 are extracellular; the sequence is FDDAGCWDMNDS. The helical transmembrane segment at 303–329 threads the bilayer; it reads TALWWVIKGPVVGSIMVNFVLFIGIII. The Cytoplasmic segment spans residues 330–347; the sequence is ILVQKLQSPDMGGNESSI. A helical membrane pass occupies residues 348–402; it reads YFSCVQKCYCKPQRAQQHSCKMSELSTITLRLARSTLLLIPLFGIHYTVFAFSPE. At 403–407 the chain is on the extracellular side; sequence NVSKR. The chain crosses the membrane as a helical span at residues 408–431; sequence ERLVFELGLGSFQGFVVAVLYCFL. At 432-496 the chain is on the cytoplasmic side; it reads NGEVQAEIKR…SSLPADNLAT (65 aa). Ser-462 and Ser-475 each carry phosphoserine.

Belongs to the G-protein coupled receptor 2 family. In terms of assembly, interacts with maxadilan, a vasodilator peptide from Lutzomyia longipalpis saliva; the interaction results in ADCYAP1R1 activation.

Its subcellular location is the cell membrane. Its function is as follows. G protein-coupled receptor activated by the neuropeptide pituitary adenylate cyclase-activating polypeptide (ADCYAP1/PACAP). Binds both PACAP27 and PACAP38 bioactive peptides. Ligand binding causes a conformation change that triggers signaling via guanine nucleotide-binding proteins (G proteins) and modulates the activity of downstream effectors. Activates cAMP-dependent pathway. May regulate the release of adrenocorticotropin, luteinizing hormone, growth hormone, prolactin, epinephrine, and catecholamine. May play a role in spermatogenesis and sperm motility. Causes smooth muscle relaxation and secretion in the gastrointestinal tract. The protein is Pituitary adenylate cyclase-activating polypeptide type I receptor of Mus musculus (Mouse).